The primary structure comprises 487 residues: Probable cytochrome P450 513B1 (487 aa).

The helical transmembrane segment at 1 to 18 (MNLLVLSVILAIIIYLIF) threads the bilayer. Cys-433 is a heme binding site.

Belongs to the cytochrome P450 family. Heme is required as a cofactor.

The protein localises to the membrane. The polypeptide is Probable cytochrome P450 513B1 (cyp513B1) (Dictyostelium discoideum (Social amoeba)).